The primary structure comprises 963 residues: Protein bicaudal C homolog 1-A (963 aa).

The tract at residues 1-48 (MAAQCESIGGDMNQSDPGSNSERSADSPVPGSEDDSPHDPEWREERFR) is disordered. Positions 12–22 (MNQSDPGSNSE) are enriched in polar residues. Over residues 35-48 (DSPHDPEWREERFR) the composition is skewed to basic and acidic residues. KH domains lie at 128 to 195 (RVTL…RVRI) and 280 to 344 (PVST…RQYL). Positions 592–601 (EASRQSNNHS) are enriched in polar residues. 3 disordered regions span residues 592-613 (EASR…TDPE), 668-713 (ERLL…TSQS), and 767-834 (LRRA…NKSA). 2 stretches are compositionally biased toward basic and acidic residues: residues 602 to 612 (SAEEVNSKTDP) and 683 to 696 (VTDK…RAAE). The segment covering 784–797 (ENSSLSRSNSREQL) has biased composition (low complexity). Residues 812–824 (IDSSQNDYSSSIG) show a composition bias toward polar residues. The SAM domain occupies 862–925 (FKGSDLPELF…LLAISELNKN (64 aa)).

The protein belongs to the BicC family.

Putative RNA-binding protein. May be involved in regulating gene expression during embryonic development. Seems to be involved in endoderm formation. Ectopic expression results in endoderm formation in the absence of mesoderm induction. This Xenopus laevis (African clawed frog) protein is Protein bicaudal C homolog 1-A (bicc1-a).